A 406-amino-acid chain; its full sequence is Solute carrier family 22 member 18 (406 aa).

10 helical membrane passes run 8–28 (GIII…FMQF), 43–63 (VSFG…GPVF), 85–105 (ALYL…FLLF), 140–160 (LGLC…TLNT), 168–188 (AILA…CVPA), 226–246 (FLVK…FSII), 258–278 (AGYL…LVIG), 295–315 (LVFA…HFCF), 316–336 (LMPG…SMLT), and 374–394 (GVPI…LVLW).

It belongs to the major facilitator (TC 2.A.1) superfamily. Organic cation transporter (TC 2.A.1.19) family. As to quaternary structure, interacts with RNF167. In terms of tissue distribution, expressed at high levels in fetal and adult kidney and liver, and extraembryonic membranes (yolk sac). Expressed at moderate levels in intestine, heart, lung and testis.

It localises to the apical cell membrane. In terms of biological role, may act as a transporter of organic cations based on a proton efflux antiport mechanism. May play a role in the transport of chloroquine and quinidine-related compounds in kidney. Plays a role in the regulation of lipid metabolism. In Mus musculus (Mouse), this protein is Solute carrier family 22 member 18 (Slc67a1).